We begin with the raw amino-acid sequence, 164 residues long: Thiol peroxidase (164 aa).

The region spanning Val18 to Asn163 is the Thioredoxin domain. The Cysteine sulfenic acid (-SOH) intermediate role is filled by Cys60. The cysteines at positions 60 and 93 are disulfide-linked.

It belongs to the peroxiredoxin family. Tpx subfamily. As to quaternary structure, homodimer.

It carries out the reaction a hydroperoxide + [thioredoxin]-dithiol = an alcohol + [thioredoxin]-disulfide + H2O. In terms of biological role, thiol-specific peroxidase that catalyzes the reduction of hydrogen peroxide and organic hydroperoxides to water and alcohols, respectively. Plays a role in cell protection against oxidative stress by detoxifying peroxides. This chain is Thiol peroxidase, found in Staphylococcus saprophyticus subsp. saprophyticus (strain ATCC 15305 / DSM 20229 / NCIMB 8711 / NCTC 7292 / S-41).